Consider the following 885-residue polypeptide: Exosome complex component 10 (885 aa).

Residues 1–10 (MAPPSPREHQ) are compositionally biased toward basic and acidic residues. 2 disordered regions span residues 1–23 (MAPP…PDAE) and 210–232 (KPLP…EDLD). Lysine 19 is covalently cross-linked (Glycyl lysine isopeptide (Lys-Gly) (interchain with G-Cter in SUMO2)). Residues 217–230 (SKERRERPQDRPED) are compositionally biased toward basic and acidic residues. Residues 289–455 (HVVSSLDELV…YIYDRMRLEL (167 aa)) form the 3'-5' exonuclease domain. Aspartate 313, glutamate 315, aspartate 371, and aspartate 440 together coordinate Mg(2+). In terms of domain architecture, HRDC spans 503–583 (NSQQLTAFQL…QQAREMPLLK (81 aa)). A Glycyl lysine isopeptide (Lys-Gly) (interchain with G-Cter in SUMO1); alternate cross-link involves residue lysine 583. Residue lysine 583 forms a Glycyl lysine isopeptide (Lys-Gly) (interchain with G-Cter in SUMO2); alternate linkage. Lysine 710 is covalently cross-linked (Glycyl lysine isopeptide (Lys-Gly) (interchain with G-Cter in SUMO2)). A disordered region spans residues 730 to 885 (VQKEPKEAAK…RGFRHNWPKR (156 aa)). Composition is skewed to basic and acidic residues over residues 732–756 (KEPK…KEES) and 776–794 (ATKK…EQKQ). The residue at position 821 (serine 821) is a Phosphoserine. Residues lysine 833, lysine 859, and lysine 873 each participate in a glycyl lysine isopeptide (Lys-Gly) (interchain with G-Cter in SUMO2) cross-link.

This sequence belongs to the exosome component 10/RRP6 family. In terms of assembly, component of the RNA exosome complex. The catalytically inactive RNA exosome core complex (Exo-9) associates with the catalytic subunit EXOSC10/RRP6 (via its N-terminus). Exo-9 may associate with DIS3 to form the nucleolar exosome complex, or DIS3L to form the cytoplasmic exosome complex. The RNA exosome complex interacts with cofactors C1D/RRP47, MPHOSPH6/MPP6 and MTREX/MTR4. Interacts with MTREX; the interaction with MTREX mediates the association of MTREX with nuclear RNA exosomes. Part of the small subunit (SSU) processome, composed of more than 70 proteins and the RNA chaperone small nucleolar RNA (snoRNA) U3. Interacts with ALYREF/THOC4. Interacts with DHX36; this interaction occurs in a RNase-insensitive manner. Interacts with NRDE2. Interacts (via C-terminus) with USP36 (via C-terminus); the interaction is facilitated by the association with RNA and promotes sumoylation of EXOSC10. Mg(2+) is required as a cofactor. In terms of processing, sumoylated by USP36; sumoylation does not significantly affect EXOSC10 nucleolar localization and association with core exosome and USP36, but regulates the nucleolar RNA exosome activity in rRNA processing by promoting binding of EXOSC10 to pre-rRNAs. Effects of sumoylation on EXOSC10 levels vary between different studies. Sumoylation of EXOSC10 is required for the modulation of EXOSC10 effects on cellular protein translation and cell proliferation. Sumoylation is promoted by mild hypothermia. Expressed in testis (at protein level).

The protein resides in the cytoplasm. It localises to the nucleus. Its subcellular location is the nucleolus. It is found in the nucleoplasm. In terms of biological role, catalytic component of the RNA exosome complex which has 3'-&gt;5' exoribonuclease activity and participates in a multitude of cellular RNA processing and degradation events. In the nucleus, the RNA exosome complex is involved in proper maturation of stable RNA species such as rRNA, snRNA and snoRNA, in the elimination of RNA processing by-products and non-coding 'pervasive' transcripts, such as antisense RNA species and promoter-upstream transcripts (PROMPTs), and of mRNAs with processing defects, thereby limiting or excluding their export to the cytoplasm. Part of the small subunit (SSU) processome, first precursor of the small eukaryotic ribosomal subunit. During the assembly of the SSU processome in the nucleolus, many ribosome biogenesis factors, an RNA chaperone and ribosomal proteins associate with the nascent pre-rRNA and work in concert to generate RNA folding, modifications, rearrangements and cleavage as well as targeted degradation of pre-ribosomal RNA by the RNA exosome. The RNA exosome may be involved in Ig class switch recombination (CSR) and/or Ig variable region somatic hypermutation (SHM) by targeting AICDA deamination activity to transcribed dsDNA substrates. In the cytoplasm, the RNA exosome complex is involved in general mRNA turnover and specifically degrades inherently unstable mRNAs containing AU-rich elements (AREs) within their 3' untranslated regions, and in RNA surveillance pathways, preventing translation of aberrant mRNAs. It seems to be involved in degradation of histone mRNA. EXOSC10 is required for nucleolar localization of C1D and probably mediates the association of MTREX, C1D and MPHOSPH6 with the RNA exosome involved in the maturation of 5.8S rRNA. Plays a role in the recruitment of replication protein A complex (RPA) and RAD51 to DNA double-strand breaks caused by irradiation, contributing to DNA repair by homologous recombination. Regulates levels of damage-induced RNAs in order to prevent DNA-RNA hybrid formation at DNA double-strand breaks and limit DNA end resection after damage. Plays a role in oocyte development, maturation and survival. Required for normal testis development and mitotic division of spermatogonia. Plays a role in proper embryo development. Required for global protein translation. Required for cell proliferation. The chain is Exosome complex component 10 from Rattus norvegicus (Rat).